The primary structure comprises 141 residues: Large ribosomal subunit protein uL11 (141 aa).

It belongs to the universal ribosomal protein uL11 family. In terms of assembly, part of the ribosomal stalk of the 50S ribosomal subunit. Interacts with L10 and the large rRNA to form the base of the stalk. L10 forms an elongated spine to which L12 dimers bind in a sequential fashion forming a multimeric L10(L12)X complex. One or more lysine residues are methylated.

Forms part of the ribosomal stalk which helps the ribosome interact with GTP-bound translation factors. This is Large ribosomal subunit protein uL11 from Thermotoga neapolitana (strain ATCC 49049 / DSM 4359 / NBRC 107923 / NS-E).